The primary structure comprises 1049 residues: Cellulose synthase A catalytic subunit 4 [UDP-forming] (1049 aa).

At 1-215 (MEPNTMASFD…ISSSKISPYR (215 aa)) the chain is on the cytoplasmic side. Residues cysteine 23, cysteine 26, cysteine 42, cysteine 45, cysteine 50, cysteine 53, cysteine 65, and cysteine 68 each coordinate Zn(2+). The RING-type; degenerate zinc finger occupies 23-69 (CKVCGDEVKDDDNGQTFVACHVCVYPVCKPCYEYERSNGNKCCPQCN). The tract at residues 76-98 (KGSPKIAGDEENNGPDDSDDELN) is disordered. Acidic residues predominate over residues 84–96 (DEENNGPDDSDDE). Serine 135 carries the post-translational modification Phosphoserine. Residues 216-236 (IVIVLRLVILVFFFRFRILTP) form a helical membrane-spanning segment. The Extracellular segment spans residues 237 to 239 (AKD). Residues 240-260 (AYPLWLISVICEIWFALSWIL) form a helical membrane-spanning segment. Residues 261-831 (DQFPKWFPIN…INTIVYPFTS (571 aa)) lie on the Cytoplasmic side of the membrane. UDP-alpha-D-glucose-binding residues include serine 299, lysine 305, glutamate 306, and aspartate 335. Residue aspartate 335 is part of the active site. The stretch at 389 to 416 (VKDRRAMKREYEEFKVRINALVAKAQKK) forms a coiled coil. Lysine 476 contacts UDP-alpha-D-glucose. Mn(2+) contacts are provided by lysine 477 and aspartate 501. Aspartate 748 is a catalytic residue. A helical transmembrane segment spans residues 832-852 (IPLLAYCTIPAVCLLTGKFII). At 853–857 (PTINN) the chain is on the extracellular side. The chain crosses the membrane as a helical span at residues 858 to 878 (FASIWFLALFLSIIATAILEL). The Cytoplasmic portion of the chain corresponds to 879 to 895 (RWSGVSINDLWRNEQFW). Residues 896–916 (VIGGVSAHLFAVFQGLLKVLF) traverse the membrane as a helical segment. Over 917 to 945 (GVDTNFTVTSKGASDEADEFGDLYLFKWT) the chain is Extracellular. N-linked (GlcNAc...) asparagine glycosylation is present at asparagine 921. Residues 946-966 (TLLIPPTTLIILNMVGVVAGV) form a helical membrane-spanning segment. The Cytoplasmic portion of the chain corresponds to 967–977 (SDAINNGYGSW). Residues 978–998 (GPLFGKLFFAFWVIVHLYPFL) traverse the membrane as a helical segment. At 999 to 1007 (KGLMGRQNR) the chain is on the extracellular side. Residues 1008–1028 (TPTIVVLWSILLASIFSLVWV) traverse the membrane as a helical segment. Over 1029-1049 (RIDPFLPKQTGPLLKQCGVDC) the chain is Cytoplasmic.

It belongs to the glycosyltransferase 2 family. Plant cellulose synthase subfamily. Interacts with CESA7 and CESA8. Assembly with CESA7 and CESA8 is required for functional complex and localization in secondary cell wall deposition sites. Interacts with STL1 and STL2, but not with GOT1. Zn(2+) serves as cofactor. Requires Mn(2+) as cofactor. Post-translationally, S-acylated. In terms of tissue distribution, confined to secondary cell wall developing tissues such as xylems and interfascicular regions. Expressed in roots, hypocotyls, leaves, inflorescences and flowers.

Its subcellular location is the cell membrane. The enzyme catalyses [(1-&gt;4)-beta-D-glucosyl](n) + UDP-alpha-D-glucose = [(1-&gt;4)-beta-D-glucosyl](n+1) + UDP + H(+). The protein operates within glycan metabolism; plant cellulose biosynthesis. Functionally, catalytic subunit of cellulose synthase terminal complexes ('rosettes'), required for beta-1,4-glucan microfibril crystallization, a major mechanism of the cell wall formation. Involved in the secondary cell wall formation. Required for the xylem cell wall thickening. This is Cellulose synthase A catalytic subunit 4 [UDP-forming] from Arabidopsis thaliana (Mouse-ear cress).